An 81-amino-acid polypeptide reads, in one-letter code: Small ribosomal subunit protein bS16 (81 aa).

This sequence belongs to the bacterial ribosomal protein bS16 family.

The chain is Small ribosomal subunit protein bS16 from Desulfotalea psychrophila (strain LSv54 / DSM 12343).